A 545-amino-acid polypeptide reads, in one-letter code: CTP synthase (545 aa).

The amidoligase domain stretch occupies residues 1–266; it reads MTTNYIFVTG…DDYICKRFSL (266 aa). S14 lines the CTP pocket. UTP is bound at residue S14. ATP-binding positions include 15–20 and D72; that span reads SLGKGI. The Mg(2+) site is built by D72 and E140. Residues 147–149, 187–192, and K223 each bind CTP; these read DIE and KTKPTQ. Residues 187–192 and K223 contribute to the UTP site; that span reads KTKPTQ. 239 to 241 lines the ATP pocket; it reads KDV. The region spanning 291 to 542 is the Glutamine amidotransferase type-1 domain; that stretch reads TIGMVGKYIE…VKAASEFQKR (252 aa). G352 lines the L-glutamine pocket. Catalysis depends on C379, which acts as the Nucleophile; for glutamine hydrolysis. Residues 380-383, E403, and R470 each bind L-glutamine; that span reads LGMQ. Active-site residues include H515 and E517.

The protein belongs to the CTP synthase family. In terms of assembly, homotetramer.

It catalyses the reaction UTP + L-glutamine + ATP + H2O = CTP + L-glutamate + ADP + phosphate + 2 H(+). The catalysed reaction is L-glutamine + H2O = L-glutamate + NH4(+). The enzyme catalyses UTP + NH4(+) + ATP = CTP + ADP + phosphate + 2 H(+). It functions in the pathway pyrimidine metabolism; CTP biosynthesis via de novo pathway; CTP from UDP: step 2/2. With respect to regulation, allosterically activated by GTP, when glutamine is the substrate; GTP has no effect on the reaction when ammonia is the substrate. The allosteric effector GTP functions by stabilizing the protein conformation that binds the tetrahedral intermediate(s) formed during glutamine hydrolysis. Inhibited by the product CTP, via allosteric rather than competitive inhibition. Catalyzes the ATP-dependent amination of UTP to CTP with either L-glutamine or ammonia as the source of nitrogen. Regulates intracellular CTP levels through interactions with the four ribonucleotide triphosphates. This is CTP synthase from Escherichia coli O127:H6 (strain E2348/69 / EPEC).